A 255-amino-acid chain; its full sequence is NAD kinase (255 aa).

Aspartate 44 (proton acceptor) is an active-site residue. NAD(+) is bound by residues 44-45 (DG), 114-115 (NE), aspartate 144, alanine 152, and 155-160 (TAYNLS).

This sequence belongs to the NAD kinase family. Requires a divalent metal cation as cofactor.

It localises to the cytoplasm. The enzyme catalyses NAD(+) + ATP = ADP + NADP(+) + H(+). Functionally, involved in the regulation of the intracellular balance of NAD and NADP, and is a key enzyme in the biosynthesis of NADP. Catalyzes specifically the phosphorylation on 2'-hydroxyl of the adenosine moiety of NAD to yield NADP. The protein is NAD kinase of Hyphomonas neptunium (strain ATCC 15444).